We begin with the raw amino-acid sequence, 104 residues long: Protein S100-A14 (104 aa).

The 35-residue stretch at Lys-27–Asn-61 folds into the EF-hand domain.

Belongs to the S-100 family. As to quaternary structure, homodimer. Interacts with AGER. As to expression, expressed at highest levels in colon and at moderate levels in thymus, kidney, liver, small intestine, and lung. Low expression in heart and no expression is seen in brain, skeletal muscle, spleen, placenta and peripheral blood leukocytes.

Its subcellular location is the cytoplasm. In terms of biological role, modulates P53/TP53 protein levels, and thereby plays a role in the regulation of cell survival and apoptosis. Depending on the context, it can promote cell proliferation or apoptosis. Plays a role in the regulation of cell migration by modulating the levels of MMP2, a matrix protease that is under transcriptional control of P53/TP53. Does not bind calcium. In Homo sapiens (Human), this protein is Protein S100-A14 (S100A14).